A 218-amino-acid polypeptide reads, in one-letter code: Probable nicotinate-nucleotide adenylyltransferase (218 aa).

It belongs to the NadD family.

The enzyme catalyses nicotinate beta-D-ribonucleotide + ATP + H(+) = deamido-NAD(+) + diphosphate. Its pathway is cofactor biosynthesis; NAD(+) biosynthesis; deamido-NAD(+) from nicotinate D-ribonucleotide: step 1/1. Its function is as follows. Catalyzes the reversible adenylation of nicotinate mononucleotide (NaMN) to nicotinic acid adenine dinucleotide (NaAD). The chain is Probable nicotinate-nucleotide adenylyltransferase from Syntrophotalea carbinolica (strain DSM 2380 / NBRC 103641 / GraBd1) (Pelobacter carbinolicus).